The primary structure comprises 248 residues: Methyl-coenzyme M reductase subunit gamma (248 aa).

Residue R121 participates in coenzyme M binding.

The protein belongs to the methyl-coenzyme M reductase gamma subunit family. As to quaternary structure, MCR is a hexamer of two alpha, two beta, and two gamma chains, forming a dimer of heterotrimers. Requires coenzyme F430 as cofactor.

It is found in the cytoplasm. It catalyses the reaction coenzyme B + methyl-coenzyme M = methane + coenzyme M-coenzyme B heterodisulfide. It participates in one-carbon metabolism; methyl-coenzyme M reduction; methane from methyl-coenzyme M: step 1/1. In terms of biological role, component of the methyl-coenzyme M reductase (MCR) I that catalyzes the reductive cleavage of methyl-coenzyme M (CoM-S-CH3 or 2-(methylthio)ethanesulfonate) using coenzyme B (CoB or 7-mercaptoheptanoylthreonine phosphate) as reductant which results in the production of methane and the mixed heterodisulfide of CoB and CoM (CoM-S-S-CoB). This is the final step in methanogenesis. This is Methyl-coenzyme M reductase subunit gamma (mcrG) from Methanosarcina barkeri (strain Fusaro / DSM 804).